A 1436-amino-acid chain; its full sequence is DNA-directed RNA polymerase subunit beta (1436 aa).

Belongs to the RNA polymerase beta chain family. The RNAP catalytic core consists of 2 alpha, 1 beta, 1 beta' and 1 omega subunit. When a sigma factor is associated with the core the holoenzyme is formed, which can initiate transcription.

It catalyses the reaction RNA(n) + a ribonucleoside 5'-triphosphate = RNA(n+1) + diphosphate. Functionally, DNA-dependent RNA polymerase catalyzes the transcription of DNA into RNA using the four ribonucleoside triphosphates as substrates. The chain is DNA-directed RNA polymerase subunit beta from Wolbachia pipientis.